Consider the following 167-residue polypeptide: Epithelial membrane protein 2 (167 aa).

The helical transmembrane segment at 1–21 threads the bilayer; it reads MLVLLAFIIAFHITSAALLFI. 3 N-linked (GlcNAc...) asparagine glycosylation sites follow: N44, N47, and N52. 3 helical membrane passes run 67–87, 95–115, and 143–163; these read TMILSTILCCIAFFIFVLQLF, FVLTSIIQLMSCLCVMIAASI, and YILAWVAFACTFISGMMYLIL.

It belongs to the PMP-22/EMP/MP20 family. In terms of assembly, interacts with PTK2; regulates PTK2 activation and localization. Interacts with ITGB3; regulates the levels of the heterodimer ITGA5-ITGB3 integrin surface expression. Interacts with P2RX7 (via C-terminus). Interacts with ITGB1; the interaction may be direct or indirect and ITGB1 has a heterodimer form. In terms of tissue distribution, expressed in ciliary body epithelia, sclera, cornea, and retinal pigment epithelium (at protein level). Expressed in lung and endometrial tissue; expression is particularly abundant in secretory endometrium (at protein level). Expressed in placental villous syncytiotrophoblasts and cytotrophoblasts and on the membrane of interstitial trophoblasts (at protein level).

It is found in the golgi apparatus membrane. The protein localises to the cell membrane. Its subcellular location is the apical cell membrane. It localises to the membrane raft. The protein resides in the cytoplasm. It is found in the nucleus. The protein localises to the perinuclear region. Its function is as follows. Functions as a key regulator of cell membrane composition by regulating protein surface expression. Also, plays a role in regulation of processes including cell migration, cell proliferation, cell contraction and cell adhesion. Regulates transepithelial migration of neutrophils into the alveolar lumen, potentially via mediation of cell surface expression of adhesion markers and lipid raft formation. Negatively regulates caveolae formation by reducing CAV1 expression and CAV1 amount by increasing lysosomal degradation. Facilitates surface trafficking and formation of lipid rafts bearing GPI-anchor proteins. Regulates surface expression of MHC1 and ICAM1 proteins increasing susceptibility to T-cell mediated cytotoxicity. Regulates the plasma membrane expression of the integrin heterodimers ITGA6-ITGB1, ITGA5-ITGB3 and ITGA5-ITGB1 resulting in modulation of cell-matrix adhesion. Also regulates many processes through PTK2. Regulates blood vessel endothelial cell migration and angiogenesis by regulating VEGF protein expression through PTK2 activation. Regulates cell migration and cell contraction through PTK2 and SRC activation. Regulates focal adhesion density, F-actin conformation and cell adhesion capacity through interaction with PTK2. Positively regulates cell proliferation. Plays a role during cell death and cell blebbing. Promotes angiogenesis and vasculogenesis through induction of VEGFA via a HIF1A-dependent pathway. Also plays a role in embryo implantation by regulating surface trafficking of integrin heterodimer ITGA5-ITGB3. Plays a role in placental angiogenesis and uterine natural killer cell regulation at the maternal-fetal placental interface, however not required in the maternal tissues for a viable pregnancy. Involved in the early stages of embryogenic development and cardiogenesis, potentially via regulation of epithelial-mesenchymal transition timing. May play a role in glomerular filtration. The sequence is that of Epithelial membrane protein 2 (EMP2) from Homo sapiens (Human).